We begin with the raw amino-acid sequence, 218 residues long: Replication protein RepB (218 aa).

The segment at 1 to 26 (MKSESKIDWTVPRPNKNPKTKQPYKR) is disordered. Over residues 16–26 (KNPKTKQPYKR) the composition is skewed to basic residues.

It belongs to the Gram-positive plasmids replication protein type 2 family.

Functionally, is essential for plasmid replication. Nicks the positive strand at the plus origin of replication. The sequence is that of Replication protein RepB (repB) from Lactiplantibacillus plantarum (Lactobacillus plantarum).